We begin with the raw amino-acid sequence, 341 residues long: Uroporphyrinogen decarboxylase (341 aa).

Residues 26–30 (RQAGR), Asp-75, Tyr-150, Ser-205, and His-318 contribute to the substrate site.

It belongs to the uroporphyrinogen decarboxylase family. In terms of assembly, homodimer.

The protein localises to the cytoplasm. The enzyme catalyses uroporphyrinogen III + 4 H(+) = coproporphyrinogen III + 4 CO2. It participates in porphyrin-containing compound metabolism; protoporphyrin-IX biosynthesis; coproporphyrinogen-III from 5-aminolevulinate: step 4/4. Functionally, catalyzes the decarboxylation of four acetate groups of uroporphyrinogen-III to yield coproporphyrinogen-III. This Thermus thermophilus (strain ATCC BAA-163 / DSM 7039 / HB27) protein is Uroporphyrinogen decarboxylase.